Consider the following 355-residue polypeptide: Tryptophan--tRNA ligase (355 aa).

ATP contacts are provided by residues 13–15 (QPT) and 21–22 (GN). A 'HIGH' region motif is present at residues 14-22 (PTGNLHLGN). Asp137 serves as a coordination point for L-tryptophan. ATP is bound by residues 149 to 151 (GED), Ile208, and 217 to 221 (KMSKS). The 'KMSKS' region signature appears at 217–221 (KMSKS).

Belongs to the class-I aminoacyl-tRNA synthetase family. In terms of assembly, homodimer.

The protein localises to the cytoplasm. It catalyses the reaction tRNA(Trp) + L-tryptophan + ATP = L-tryptophyl-tRNA(Trp) + AMP + diphosphate + H(+). Its function is as follows. Catalyzes the attachment of tryptophan to tRNA(Trp). In Brucella melitensis biotype 1 (strain ATCC 23456 / CCUG 17765 / NCTC 10094 / 16M), this protein is Tryptophan--tRNA ligase.